A 163-amino-acid polypeptide reads, in one-letter code: MALLGNEKIYLSEETYNKYKNEYTELVTVERPAVQASLKEARAQGDLSENAEYDAARDRQSEVERRILELERILENAEIIDTKSAVQNKAGIGATVRYLNMKTNKELVVTIMGPHDSNPIENKISNESPVAQAIMEANGIGDVVEVEVPQKYNIKVLDISYAK.

Positions 49 to 80 form a coiled coil; the sequence is ENAEYDAARDRQSEVERRILELERILENAEII.

It belongs to the GreA/GreB family.

Necessary for efficient RNA polymerase transcription elongation past template-encoded arresting sites. The arresting sites in DNA have the property of trapping a certain fraction of elongating RNA polymerases that pass through, resulting in locked ternary complexes. Cleavage of the nascent transcript by cleavage factors such as GreA or GreB allows the resumption of elongation from the new 3'terminus. GreA releases sequences of 2 to 3 nucleotides. In Mycoplasmopsis agalactiae (strain NCTC 10123 / CIP 59.7 / PG2) (Mycoplasma agalactiae), this protein is Transcription elongation factor GreA.